The primary structure comprises 254 residues: MSFVALIPARMASTRLPDKPLADIAGKPMVVRVAERAARSGATGVYIATDDARVAQAAAAHGHAALLTRADHPTGTDRLAEAVEQLGLADDTVVVNVQGDEPLIDPALVDAVAATLQASPDAAIATCACPLADAEALFNPNVVKVVCGAGGRALYFSRAPIPWARDALAGGTRVLAPGLPALHHIGLYAYRAGFLRRFPALPQGALEHYEALEQLRALEHGHAIVVHRTPQPPMAGVDTPADLERVRALYADGL.

The protein belongs to the KdsB family.

It is found in the cytoplasm. The catalysed reaction is 3-deoxy-alpha-D-manno-oct-2-ulosonate + CTP = CMP-3-deoxy-beta-D-manno-octulosonate + diphosphate. It participates in nucleotide-sugar biosynthesis; CMP-3-deoxy-D-manno-octulosonate biosynthesis; CMP-3-deoxy-D-manno-octulosonate from 3-deoxy-D-manno-octulosonate and CTP: step 1/1. It functions in the pathway bacterial outer membrane biogenesis; lipopolysaccharide biosynthesis. Functionally, activates KDO (a required 8-carbon sugar) for incorporation into bacterial lipopolysaccharide in Gram-negative bacteria. In Bordetella petrii (strain ATCC BAA-461 / DSM 12804 / CCUG 43448), this protein is 3-deoxy-manno-octulosonate cytidylyltransferase.